The chain runs to 426 residues: Cdc25-like protein phosphatase twine (426 aa).

Residues 1-27 (MASKRLMLDVEEEDDESGACGQENFDP) are disordered. Residues 265 to 371 (SQGGYEIIDC…FFGLYSQLCQ (107 aa)) enclose the Rhodanese domain. Cys318 is an active-site residue.

This sequence belongs to the MPI phosphatase family. Expressed in developing male and female germ cells.

The catalysed reaction is O-phospho-L-tyrosyl-[protein] + H2O = L-tyrosyl-[protein] + phosphate. Functionally, required during meiosis. Regulates the transition from the extended G2 phase to the onset of the first meiotic division. This Drosophila melanogaster (Fruit fly) protein is Cdc25-like protein phosphatase twine (twe).